The following is a 465-amino-acid chain: Na(+)-translocating NADH-quinone reductase subunit A (465 aa).

Belongs to the NqrA family. In terms of assembly, composed of six subunits; NqrA, NqrB, NqrC, NqrD, NqrE and NqrF.

The enzyme catalyses a ubiquinone + n Na(+)(in) + NADH + H(+) = a ubiquinol + n Na(+)(out) + NAD(+). Functionally, NQR complex catalyzes the reduction of ubiquinone-1 to ubiquinol by two successive reactions, coupled with the transport of Na(+) ions from the cytoplasm to the periplasm. NqrA to NqrE are probably involved in the second step, the conversion of ubisemiquinone to ubiquinol. The sequence is that of Na(+)-translocating NADH-quinone reductase subunit A from Chlamydia trachomatis serovar A (strain ATCC VR-571B / DSM 19440 / HAR-13).